Consider the following 105-residue polypeptide: MTGKAKPKKHTAKEIQAKIDAALTNRGGGKAGIADRTGKEKGGHAKYECPHCKITAPGLKTMQIHHESKHPNIIYEESKLVNLHAVLAPVAESKPKPGIRGSLKK.

A disordered region spans residues Arg-26–Lys-46. A compositionally biased stretch (basic and acidic residues) spans Arg-36 to Lys-46.

In terms of tissue distribution, mainly expressed in the epidermis.

The protein resides in the nucleus. It localises to the cytoplasm. It is found in the stress granule. In terms of biological role, required for acclimation to reactive oxygen species (ROS) responses downstream of beta-cyclocitral (beta-cc) or mediated by dihydroactinidiolide, including singlet oxygen 1O(2) detoxification reactions, especially upon light-mediated photooxidative stress, and leading to programmed cell death. Prevents leaf senescence. Involved in cold acclimation. The protein is Protein METHYLENE BLUE SENSITIVITY 1 of Arabidopsis thaliana (Mouse-ear cress).